The following is a 352-amino-acid chain: Uricase (352 aa).

The tract at residues 1–32 is disordered; the sequence is MFATPLRQPAAANHQTPKNSAGMDEHGKPYQY. Over residues 23–32 the composition is skewed to basic and acidic residues; it reads MDEHGKPYQY. Catalysis depends on charge relay system residues Lys-41 and Thr-86. Positions 86, 87, 214, 231, 279, 280, and 306 each coordinate urate. His-308 functions as the Charge relay system in the catalytic mechanism. A Microbody targeting signal motif is present at residues 350–352; sequence SHL.

This sequence belongs to the uricase family. Malpighian tubules.

The protein resides in the peroxisome. It catalyses the reaction urate + O2 + H2O = 5-hydroxyisourate + H2O2. The protein operates within purine metabolism; urate degradation; (S)-allantoin from urate: step 1/3. Repressed by 20-hydroxyecdysone. Its function is as follows. Catalyzes the oxidation of uric acid to 5-hydroxyisourate, which is further processed to form (S)-allantoin. The chain is Uricase (Uro) from Drosophila melanogaster (Fruit fly).